The chain runs to 362 residues: Peptide chain release factor 1 (362 aa).

An N5-methylglutamine modification is found at Gln235.

Belongs to the prokaryotic/mitochondrial release factor family. Post-translationally, methylated by PrmC. Methylation increases the termination efficiency of RF1.

The protein resides in the cytoplasm. Peptide chain release factor 1 directs the termination of translation in response to the peptide chain termination codons UAG and UAA. The protein is Peptide chain release factor 1 of Acinetobacter baylyi (strain ATCC 33305 / BD413 / ADP1).